The primary structure comprises 403 residues: Leu/Ile/Val-binding protein homolog 8 (403 aa).

A signal peptide spans 1–26 (MRLSRLLIGASLGVALSSTVFTAALA).

This sequence belongs to the leucine-binding protein family.

In terms of biological role, component of an amino-acid transport system. In Brucella melitensis biotype 1 (strain ATCC 23456 / CCUG 17765 / NCTC 10094 / 16M), this protein is Leu/Ile/Val-binding protein homolog 8.